The sequence spans 337 residues: Mycothiol acetyltransferase (337 aa).

2 consecutive N-acetyltransferase domains span residues 11–151 and 154–337; these read LDER…FELP and VRLR…MYRK. Glu-37 contributes to the 1D-myo-inositol 2-(L-cysteinylamino)-2-deoxy-alpha-D-glucopyranoside binding site. 81–83 lines the acetyl-CoA pocket; sequence LVI. Residue Glu-182 coordinates 1D-myo-inositol 2-(L-cysteinylamino)-2-deoxy-alpha-D-glucopyranoside. The tract at residues 210-246 is disordered; it reads RPTGSGDGDVADGGSTDGGPADSGSADGGAGEGGTGD. Residues 221–234 are compositionally biased toward low complexity; that stretch reads DGGSTDGGPADSGS. Positions 235 to 246 are enriched in gly residues; sequence ADGGAGEGGTGD. Positions 257 and 271 each coordinate 1D-myo-inositol 2-(L-cysteinylamino)-2-deoxy-alpha-D-glucopyranoside. Acetyl-CoA-binding positions include 275 to 277 and 282 to 288; these read VGV and QGGGLGR. Tyr-309 lines the 1D-myo-inositol 2-(L-cysteinylamino)-2-deoxy-alpha-D-glucopyranoside pocket. Residue 314 to 319 coordinates acetyl-CoA; it reads NTAAIR.

This sequence belongs to the acetyltransferase family. MshD subfamily. As to quaternary structure, monomer.

The catalysed reaction is 1D-myo-inositol 2-(L-cysteinylamino)-2-deoxy-alpha-D-glucopyranoside + acetyl-CoA = mycothiol + CoA + H(+). Functionally, catalyzes the transfer of acetyl from acetyl-CoA to desacetylmycothiol (Cys-GlcN-Ins) to form mycothiol. This chain is Mycothiol acetyltransferase, found in Streptosporangium roseum (strain ATCC 12428 / DSM 43021 / JCM 3005 / KCTC 9067 / NCIMB 10171 / NRRL 2505 / NI 9100).